The primary structure comprises 148 residues: MKVALGGTFEPLHEGHKKLIDVAIKLGGRDITIGVTSDRMARARIRSVLPFAIRAENVKRYVMRKYGFEPEIVKITNPYGKTLDVDFEYLVVSPETYEMALKINQKREELGKRKITIVKVDWMMAEDGKPISSTRIKRGEIDRYGGII.

This sequence belongs to the eukaryotic CoaD family.

Its subcellular location is the cytoplasm. The catalysed reaction is (R)-4'-phosphopantetheine + ATP + H(+) = 3'-dephospho-CoA + diphosphate. Its pathway is cofactor biosynthesis; coenzyme A biosynthesis. Reversibly transfers an adenylyl group from ATP to 4'-phosphopantetheine, yielding dephospho-CoA (dPCoA) and pyrophosphate. This is Phosphopantetheine adenylyltransferase from Archaeoglobus fulgidus (strain ATCC 49558 / DSM 4304 / JCM 9628 / NBRC 100126 / VC-16).